The primary structure comprises 62 residues: Sperm protamine P1 (62 aa).

The disordered stretch occupies residues 1 to 62 (MARSRRHSRS…RCSRRRRRRC (62 aa)).

This sequence belongs to the protamine P1 family. In terms of tissue distribution, testis.

It localises to the nucleus. It is found in the chromosome. In terms of biological role, protamines substitute for histones in the chromatin of sperm during the haploid phase of spermatogenesis. They compact sperm DNA into a highly condensed, stable and inactive complex. The sequence is that of Sperm protamine P1 (PRM1) from Planigale ingrami (Long-tailed planigale).